The chain runs to 390 residues: Heparan sulfate glucosamine 3-O-sulfotransferase 3B1 (390 aa).

Positions 1–25 are disordered; it reads MGQRLSGGRSCLDVPGRFLPQPPPP. Topologically, residues 1–32 are cytoplasmic; it reads MGQRLSGGRSCLDVPGRFLPQPPPPPPPVRRK. A helical; Signal-anchor for type II membrane protein transmembrane segment spans residues 33-53; it reads LALLFAMLCIWLYMFLYSCAG. The Lumenal segment spans residues 54-390; it reads SCTAAPGLLL…QMTGRDFGWD (337 aa). The interval 79–125 is disordered; sequence TAPNETSPKMPFRAPPANSLAAGKDKTVGAGSQEEQSPEAPDSPSPI. The N-linked (GlcNAc...) asparagine glycan is linked to asparagine 82. 147–151 lines the 3'-phosphoadenylyl sulfate pocket; it reads KGGTR. Substrate contacts are provided by residues 169-175 and 200-203; these read EPHFFDR and KTPS. 3'-phosphoadenylyl sulfate is bound by residues arginine 228 and serine 236. An N-linked (GlcNAc...) asparagine glycan is attached at asparagine 258. Substrate is bound at residue 268–269; it reads WS. N-linked (GlcNAc...) asparagine glycosylation occurs at asparagine 329. Cysteines 336 and 348 form a disulfide. 353-357 contacts 3'-phosphoadenylyl sulfate; the sequence is KGRAH.

The protein belongs to the sulfotransferase 1 family.

It is found in the golgi apparatus membrane. The catalysed reaction is alpha-D-glucosaminyl-[heparan sulfate](n) + 3'-phosphoadenylyl sulfate = 3-sulfo-alpha-D-glucosaminyl-[heparan sulfate](n) + adenosine 3',5'-bisphosphate + H(+). Its function is as follows. Sulfotransferase that utilizes 3'-phospho-5'-adenylyl sulfate (PAPS) to catalyze the transfer of a sulfo group to an N-unsubstituted glucosamine linked to a 2-O-sulfo iduronic acid unit on heparan sulfate. Catalyzes the O-sulfation of glucosamine in IdoUA2S-GlcNS and also in IdoUA2S-GlcNH2. Unlike HS3ST1/3-OST-1, does not convert non-anticoagulant heparan sulfate to anticoagulant heparan sulfate. In Mus musculus (Mouse), this protein is Heparan sulfate glucosamine 3-O-sulfotransferase 3B1 (Hs3st3b1).